The primary structure comprises 566 residues: Solute carrier family 22 member 16 (566 aa).

The helical transmembrane segment at 20 to 40 threads the bilayer; sequence FASAFQTISCGIHYLASVFIA. Asn52, Asn60, and Asn112 each carry an N-linked (GlcNAc...) asparagine glycan. The next 5 helical transmembrane spans lie at 149-169, 176-196, 201-221, 237-257, and 261-281; these read LIQPIFMLGVLIGAVIFGDIA, PIIWITSTGQFLFGIAVAFTF, FVIVRFLLAMVSSGYYVVVFV, MHVHAFFAVGVMIVSLVGFLV, and WIYQIILSLTTLPFVLCCWML. N-linked (GlcNAc...) asparagine glycosylation occurs at Asn344. Transmembrane regions (helical) follow at residues 351–371, 381–401, 408–428, 436–456, 468–488, and 493–513; these read TITVWLIWFTGSLGYYVFALN, LNLFLTGAVEIPSYIVACLGM, NTLAPFLIISAVICGVIMLIP, IAMSMAGKFSIAVAFGLIYLY, LAVGSGSMMCRIGSVVAPFCV, and VWIFMPQMLVGIMAFLTGILT.

It belongs to the major facilitator (TC 2.A.1) superfamily. Organic cation transporter (TC 2.A.1.19) family.

The protein localises to the membrane. Its function is as follows. High affinity carnitine transporter. The sequence is that of Solute carrier family 22 member 16 (slc22a16) from Xenopus laevis (African clawed frog).